We begin with the raw amino-acid sequence, 1028 residues long: Contactin-6 (1028 aa).

The first 19 residues, 1 to 19, serve as a signal peptide directing secretion; sequence MRLLWKLVILLPLINSCAG. Ig-like C2-type domains follow at residues 32 to 117, 122 to 208, 227 to 308, 318 to 402, 408 to 502, and 500 to 587; these read PQDV…AKLQ, EDFE…RSVQ, PKIE…RNLA, PEWE…AELR, PDFS…RTII, and TIIT…ERLS. 6 disulfide bridges follow: cysteine 50–cysteine 100, cysteine 144–cysteine 196, cysteine 249–cysteine 297, cysteine 339–cysteine 386, cysteine 431–cysteine 479, and cysteine 521–cysteine 577. Asparagine 65 and asparagine 193 each carry an N-linked (GlcNAc...) asparagine glycan. Residues asparagine 368, asparagine 377, and asparagine 468 are each glycosylated (N-linked (GlcNAc...) asparagine). Fibronectin type-III domains are found at residues 600-698, 703-800, 805-901, and 902-996; these read PPED…TKAS, APGN…SGED, APRG…TKKS, and PPSQ…KMSS. Residues asparagine 659, asparagine 765, asparagine 860, and asparagine 865 are each glycosylated (N-linked (GlcNAc...) asparagine). Tyrosine 882 bears the Phosphotyrosine mark. N-linked (GlcNAc...) asparagine glycans are attached at residues asparagine 895, asparagine 931, asparagine 956, and asparagine 957. The GPI-anchor amidated serine moiety is linked to residue serine 999. The propeptide at 1000–1028 is removed in mature form; the sequence is TGVQISKPSTQSLSMVGVFYCFAIHPLSR.

It belongs to the immunoglobulin superfamily. Contactin family. Interacts with PTPRG. In terms of tissue distribution, expressed in brain. In brain, it is preferentially expressed in the accessory olfactory bulb, layers II/III and V of the cerebral cortex, piriform cortex, anterior thalamic nuclei, locus coeruleus of the pons and mesencephalic trigeminal nucleus and in Purkinje cells of the cerebellum.

It localises to the cell membrane. In terms of biological role, contactins mediate cell surface interactions during nervous system development. Participates in oligodendrocytes generation by acting as a ligand of NOTCH1. Its association with NOTCH1 promotes NOTCH1 activation through the released notch intracellular domain (NICD) and subsequent translocation to the nucleus. Involved in motor coordination. This is Contactin-6 (Cntn6) from Mus musculus (Mouse).